Reading from the N-terminus, the 801-residue chain is Triacylglycerol lipase SDP1L (801 aa).

The N-linked (GlcNAc...) asparagine glycan is linked to N130. 2 helical membrane-spanning segments follow: residues 232 to 249 and 261 to 277; these read ALLL…LGVV and IIAG…VVGT. Residues 233 to 436 enclose the PNPLA domain; sequence LLLSGGASLG…EMDLPMIQLK (204 aa). The GXSXG signature appears at 264–268; it reads GSSVG. S266 (nucleophile) is an active-site residue. N-linked (GlcNAc...) asparagine glycosylation is found at N328 and N332. D423 (proton acceptor) is an active-site residue. N-linked (GlcNAc...) asparagine glycosylation is found at N605, N620, N649, N653, N708, and N759. A disordered region spans residues 648–675; sequence SNRTSNLSHTYDAGSECDSPEAEDWTRS. Positions 750-801 are disordered; sequence MNSEPEDSQNESEIPETPESVQLDSPEKDIIDGESSASEDGDAQANLIHDHE. Residues 753–765 are compositionally biased toward acidic residues; it reads EPEDSQNESEIPE.

Highly expressed in mature pollen.

The protein resides in the lipid droplet. It localises to the membrane. The enzyme catalyses a triacylglycerol + H2O = a diacylglycerol + a fatty acid + H(+). In terms of biological role, may be involved in the release of fatty acids from the oil body in germinating seedlings. Can hydrolyze triacylglycerols in vitro. The protein is Triacylglycerol lipase SDP1L of Arabidopsis thaliana (Mouse-ear cress).